Reading from the N-terminus, the 420-residue chain is Transcriptional adapter 2-beta (420 aa).

The segment at 4 to 59 (LGKKYCVYCLAEVSPLRFRCTECQDIELCPECFSAGAEIGHHRRYHGYQLVDGGRF) adopts a ZZ-type zinc-finger fold. Zn(2+) is bound by residues cysteine 9, cysteine 12, cysteine 23, cysteine 26, cysteine 32, cysteine 35, histidine 45, and histidine 49. The SANT domain occupies 65–118 (EAEGGWTSREEQLLLDAIEQFGFGNWEDMAAHVGASRTPQEVMEHYVSMYIHGN). The segment at 305–335 (SAEYEAARHKREKRKENKNLAGSKRGKEDGK) is disordered.

As to quaternary structure, interacts with GCN5L2, SMARCA4, SMARCE1 and PAX5. Component of the TFTC-HAT complex.

The protein localises to the nucleus. In terms of biological role, coactivates PAX5-dependent transcription together with either SMARCA4 or GCN5L2. In Homo sapiens (Human), this protein is Transcriptional adapter 2-beta (TADA2B).